Reading from the N-terminus, the 266-residue chain is Imidazole glycerol phosphate synthase subunit HisF (266 aa).

Active-site residues include Asp11 and Asp130.

This sequence belongs to the HisA/HisF family. As to quaternary structure, heterodimer of HisH and HisF.

It is found in the cytoplasm. The enzyme catalyses 5-[(5-phospho-1-deoxy-D-ribulos-1-ylimino)methylamino]-1-(5-phospho-beta-D-ribosyl)imidazole-4-carboxamide + L-glutamine = D-erythro-1-(imidazol-4-yl)glycerol 3-phosphate + 5-amino-1-(5-phospho-beta-D-ribosyl)imidazole-4-carboxamide + L-glutamate + H(+). Its pathway is amino-acid biosynthesis; L-histidine biosynthesis; L-histidine from 5-phospho-alpha-D-ribose 1-diphosphate: step 5/9. Functionally, IGPS catalyzes the conversion of PRFAR and glutamine to IGP, AICAR and glutamate. The HisF subunit catalyzes the cyclization activity that produces IGP and AICAR from PRFAR using the ammonia provided by the HisH subunit. The protein is Imidazole glycerol phosphate synthase subunit HisF of Verminephrobacter eiseniae (strain EF01-2).